An 836-amino-acid polypeptide reads, in one-letter code: Translation initiation factor IF-2 (836 aa).

The disordered stretch occupies residues 1-233 (MSDTDGKKPL…RSLAAMKRKQ (233 aa)). Positions 18 to 27 (SGQVKQSFSH) are enriched in polar residues. Low complexity predominate over residues 50-60 (SGSSTTTSSPS). Positions 88-156 (KLREVEDAKR…AARRAEEAKR (69 aa)) are enriched in basic and acidic residues. The segment covering 167–176 (PAESRASAPP) has biased composition (low complexity). Residues 185-206 (SRKEREREADRDRTTKKDDSRR) are compositionally biased toward basic and acidic residues. The tr-type G domain maps to 333–501 (PRPPIITIMG…NIALQAEILD (169 aa)). Residues 342–349 (GHVDHGKT) form a G1 region. 342 to 349 (GHVDHGKT) provides a ligand contact to GTP. Residues 367-371 (GITQH) are G2. Residues 389-392 (DTPG) form a G3 region. GTP-binding positions include 389-393 (DTPGH) and 443-446 (NKID). A G4 region spans residues 443–446 (NKID). A G5 region spans residues 479 to 481 (SAK).

The protein belongs to the TRAFAC class translation factor GTPase superfamily. Classic translation factor GTPase family. IF-2 subfamily.

It is found in the cytoplasm. One of the essential components for the initiation of protein synthesis. Protects formylmethionyl-tRNA from spontaneous hydrolysis and promotes its binding to the 30S ribosomal subunits. Also involved in the hydrolysis of GTP during the formation of the 70S ribosomal complex. In Cereibacter sphaeroides (strain ATCC 17023 / DSM 158 / JCM 6121 / CCUG 31486 / LMG 2827 / NBRC 12203 / NCIMB 8253 / ATH 2.4.1.) (Rhodobacter sphaeroides), this protein is Translation initiation factor IF-2.